The primary structure comprises 375 residues: 1-deoxy-D-xylulose 5-phosphate reductoisomerase (375 aa).

Positions 10, 11, 12, 13, 37, and 114 each coordinate NADPH. K115 contributes to the 1-deoxy-D-xylulose 5-phosphate binding site. E116 contributes to the NADPH binding site. Position 136 (D136) interacts with Mn(2+). 4 residues coordinate 1-deoxy-D-xylulose 5-phosphate: S137, E138, S162, and H185. Residue E138 coordinates Mn(2+). G191 contacts NADPH. Residues S198, N203, K204, and E207 each coordinate 1-deoxy-D-xylulose 5-phosphate. Position 207 (E207) interacts with Mn(2+).

This sequence belongs to the DXR family. Requires Mg(2+) as cofactor. The cofactor is Mn(2+).

The enzyme catalyses 2-C-methyl-D-erythritol 4-phosphate + NADP(+) = 1-deoxy-D-xylulose 5-phosphate + NADPH + H(+). It participates in isoprenoid biosynthesis; isopentenyl diphosphate biosynthesis via DXP pathway; isopentenyl diphosphate from 1-deoxy-D-xylulose 5-phosphate: step 1/6. Its function is as follows. Catalyzes the NADPH-dependent rearrangement and reduction of 1-deoxy-D-xylulose-5-phosphate (DXP) to 2-C-methyl-D-erythritol 4-phosphate (MEP). This Sulfurihydrogenibium sp. (strain YO3AOP1) protein is 1-deoxy-D-xylulose 5-phosphate reductoisomerase.